Reading from the N-terminus, the 258-residue chain is tRNA pseudouridine synthase A (258 aa).

Residue Asp-52 is the Nucleophile of the active site. Position 110 (Tyr-110) interacts with substrate.

This sequence belongs to the tRNA pseudouridine synthase TruA family. As to quaternary structure, homodimer.

The enzyme catalyses uridine(38/39/40) in tRNA = pseudouridine(38/39/40) in tRNA. Functionally, formation of pseudouridine at positions 38, 39 and 40 in the anticodon stem and loop of transfer RNAs. The polypeptide is tRNA pseudouridine synthase A (Francisella tularensis subsp. holarctica (strain LVS)).